The sequence spans 140 residues: Putative nickel-responsive regulator 3 (140 aa).

Ni(2+) contacts are provided by H81, H92, H94, and C100.

This sequence belongs to the transcriptional regulatory CopG/NikR family. Requires Ni(2+) as cofactor.

Functionally, transcriptional regulator. The protein is Putative nickel-responsive regulator 3 of Methanosarcina mazei (strain ATCC BAA-159 / DSM 3647 / Goe1 / Go1 / JCM 11833 / OCM 88) (Methanosarcina frisia).